The primary structure comprises 336 residues: MSEVEKKLEMFVTVYYSLNVTLALSINILLLFIMKTTKSSLLKDMQYYLFNTALFEIIVSLSTYFAQCRPVANKSTLAVFCHGPCKYFGKNTCFVTFAVVQCSVVAASFSILLSFYYRYRLLKVNFKKKHKHATTFIIFSFFPTVMLLFQLLTDSNFAIVEAETREMHPDYDYVNNALIGFSDSKSPAAIIAQSLISLGVYMSPLIAFHYRRKINKILSTNTGQRIPVAYCKQLINGLLIQTLIPFCVYIPPYSYFLYSQLSGHSNLYFEYLLNIFGSFTAFINPLLTFYFVLPYRRALCKKVFKYFPSISEEGTEITTFPTTVQFQRGHTASTKF.

7 consecutive transmembrane segments (helical) span residues 14–34 (VYYSLNVTLALSINILLLFIM), 48–68 (YLFNTALFEIIVSLSTYFAQC), 93–113 (CFVTFAVVQCSVVAASFSILL), 133–153 (ATTFIIFSFFPTVMLLFQLLT), 188–208 (AAIIAQSLISLGVYMSPLIAF), 237–257 (GLLIQTLIPFCVYIPPYSYFL), and 275–295 (IFGSFTAFINPLLTFYFVLPY).

It belongs to the nematode receptor-like protein srd family.

The protein resides in the membrane. This is Serpentine receptor class delta-51 (srd-51) from Caenorhabditis elegans.